We begin with the raw amino-acid sequence, 276 residues long: Glutamate racemase (276 aa).

Residues 10 to 11 and 42 to 43 each bind substrate; these read DS and YG. The Proton donor/acceptor role is filled by Cys73. A substrate-binding site is contributed by 74–75; it reads NS. The active-site Proton donor/acceptor is Cys183. 184 to 185 contributes to the substrate binding site; that stretch reads TH.

This sequence belongs to the aspartate/glutamate racemases family.

It carries out the reaction L-glutamate = D-glutamate. It functions in the pathway cell wall biogenesis; peptidoglycan biosynthesis. Functionally, provides the (R)-glutamate required for cell wall biosynthesis. The polypeptide is Glutamate racemase (Parafrankia sp. (strain EAN1pec)).